Consider the following 156-residue polypeptide: Endogenous retrovirus group K member 19 Pro protein (156 aa).

Residues 21–96 (FEGLVDTGAD…IPLNLWGRDL (76 aa)) enclose the Peptidase A2 domain. Asp-26 is a catalytic residue. One can recognise a G-patch domain in the interval 111–156 (YSPTSQKIMTKMGYILGKGLGKNEDGIKIPVEAKINQKREGIGYPF).

Belongs to the peptidase A2 family. HERV class-II K(HML-2) subfamily. In terms of assembly, active as a homodimer. Post-translationally, autoproteolytically processed at the N-terminus. Expected C-terminal autoprocessing not detected. The sequence shown is that of the processed Pro protein.

It catalyses the reaction Processing at the authentic HIV-1 PR recognition site and release of the mature p17 matrix and the p24 capsid protein, as a result of the cleavage of the -SQNY-|-PIVQ- cleavage site.. In terms of biological role, retroviral proteases have roles in the processing of the primary translation products and the maturation of the viral particle. Endogenous Pro proteins may have kept, lost or modified their original function during evolution. In Homo sapiens (Human), this protein is Endogenous retrovirus group K member 19 Pro protein (ERVK-19).